The chain runs to 214 residues: Glucose-6-phosphate isomerase (214 aa).

The Fe cation site is built by His-92, His-94, Glu-101, and His-140.

Belongs to the archaeal-type GPI family. In terms of assembly, homodimer.

Its subcellular location is the cytoplasm. The catalysed reaction is alpha-D-glucose 6-phosphate = beta-D-fructose 6-phosphate. The protein operates within carbohydrate degradation; glycolysis; D-glyceraldehyde 3-phosphate and glycerone phosphate from D-glucose: step 2/4. The polypeptide is Glucose-6-phosphate isomerase (Sinorhizobium medicae (strain WSM419) (Ensifer medicae)).